The primary structure comprises 432 residues: D-amino acid dehydrogenase 1 (432 aa).

3-17 is a binding site for FAD; it reads VLILGSGVVGTVSAY.

Belongs to the DadA oxidoreductase family. FAD serves as cofactor.

It catalyses the reaction a D-alpha-amino acid + A + H2O = a 2-oxocarboxylate + AH2 + NH4(+). Oxidative deamination of D-amino acids. In Pseudomonas putida (strain ATCC 47054 / DSM 6125 / CFBP 8728 / NCIMB 11950 / KT2440), this protein is D-amino acid dehydrogenase 1 (dadA1).